The primary structure comprises 1113 residues: Translation initiation factor IF-2 (1113 aa).

4 stretches are compositionally biased toward polar residues: residues 56 to 72 (QSNQ…SSKE), 129 to 139 (KANTSNQSKGV), 162 to 187 (LENN…TQLV), and 194 to 205 (TKNNEPPQQKTS). Disordered stretches follow at residues 56 to 446 (QSNQ…IGEN) and 470 to 504 (LARP…RQRR). Residues 248–265 (PVQPRTQNNQNRQRIPNK) show a composition bias toward low complexity. The span at 415 to 429 (RRSDWDDAAKLEALR) shows a compositional bias: basic and acidic residues. Basic residues-rich tracts occupy residues 474-483 (AKPKSTKKSN) and 490-504 (TRKR…RQRR). Residues 605-777 (RRPPVVTVMG…VLLVTEVEDL (173 aa)) form the tr-type G domain. The interval 614–621 (GHVDHGKT) is G1. 614–621 (GHVDHGKT) is a GTP binding site. Residues 639–643 (GITQH) form a G2 region. The tract at residues 664–667 (DTPG) is G3. GTP contacts are provided by residues 664 to 668 (DTPGH) and 718 to 721 (NKID). The interval 718 to 721 (NKID) is G4. Residues 754–756 (SAI) form a G5 region.

It belongs to the TRAFAC class translation factor GTPase superfamily. Classic translation factor GTPase family. IF-2 subfamily.

The protein localises to the cytoplasm. In terms of biological role, one of the essential components for the initiation of protein synthesis. Protects formylmethionyl-tRNA from spontaneous hydrolysis and promotes its binding to the 30S ribosomal subunits. Also involved in the hydrolysis of GTP during the formation of the 70S ribosomal complex. This chain is Translation initiation factor IF-2, found in Prochlorococcus marinus (strain MIT 9211).